The sequence spans 253 residues: 5'-nucleotidase SurE (253 aa).

Residues Asp-8, Asp-9, Ser-39, and Asn-95 each coordinate a divalent metal cation.

The protein belongs to the SurE nucleotidase family. The cofactor is a divalent metal cation.

The protein localises to the cytoplasm. The catalysed reaction is a ribonucleoside 5'-phosphate + H2O = a ribonucleoside + phosphate. Its function is as follows. Nucleotidase that shows phosphatase activity on nucleoside 5'-monophosphates. In Desulfatibacillum aliphaticivorans, this protein is 5'-nucleotidase SurE.